Here is a 161-residue protein sequence, read N- to C-terminus: uncharacterized protein (161 aa).

This is an uncharacterized protein from Homo sapiens (Human).